We begin with the raw amino-acid sequence, 351 residues long: MAETMRALRKLEAGPGATLQEVPIPTIGPRDVLVKVRAASICGTDYHIYTWDPWSAGRVKPPLTIGHELAGEVVAVGREVTACKVGDYVSAETHIVCNRCPRCHMGEYHLCENTKILGVDTDGAFAEYVAVPEQNIWVNDKDIPFELQSIQEPLGNAVHTALNGDLTARSVLITGCGPIGIMSVPVAKMAGAEIVMAMDINEYRLQLAGQLGADVLINPTKQDPVEVVRSYTRGYGADVVLEMSGNPTAIRQGLKAARNGARISLLGLPGRPLELDLAADVIMRGLVLQGITGRRMWQTWYQVRSLYRAGLAERLRPLVTHRMPLEQIDAAMELMGSGQSGKIVLVPDLKA.

Cys42 is a Zn(2+) binding site. Catalysis depends on charge relay system residues Thr44 and His47. Zn(2+)-binding residues include His67, Glu68, Cys97, Cys100, Cys103, and Cys111. NAD(+) is bound by residues Ile179, Asp199, Arg204, 266-268 (LGL), and 291-292 (IT).

The protein belongs to the zinc-containing alcohol dehydrogenase family. Homotetramer. Zn(2+) is required as a cofactor.

It is found in the cytoplasm. The enzyme catalyses L-threonine + NAD(+) = (2S)-2-amino-3-oxobutanoate + NADH + H(+). It participates in amino-acid degradation; L-threonine degradation via oxydo-reductase pathway; glycine from L-threonine: step 1/2. Catalyzes the NAD(+)-dependent oxidation of L-threonine to 2-amino-3-ketobutyrate. The chain is L-threonine 3-dehydrogenase from Symbiobacterium thermophilum (strain DSM 24528 / JCM 14929 / IAM 14863 / T).